We begin with the raw amino-acid sequence, 211 residues long: MPGSTKSDTKLENEIRISYKSDALDYVYKAIVLFETYDEIILSGVGKAISSVVNVAEMVKRRAKGLHQFTKLYEKEHVIKREDNSGLKKNAKNEDKKSGDEEEEEEEEEEDEENNKNKEANNRTVEFITTVPCMKIILSKNEDKIDKNEIGYQKPLDEKEVNVMTPEQILKEKSYRRRYRRGGRGGDRFRSYRRNYYETSMWNNRRYEKRN.

Over residues 84-99 (NSGLKKNAKNEDKKSG) the composition is skewed to basic and acidic residues. Positions 84–121 (NSGLKKNAKNEDKKSGDEEEEEEEEEEDEENNKNKEAN) are disordered. A compositionally biased stretch (acidic residues) spans 100–113 (DEEEEEEEEEEDEE).

The protein belongs to the histone-like Alba family. Identified in a TARE6-associated complex consisting of over 30 proteins and including ALBA1, ALBA2 and ALBA4; the complex binds to the non-coding subtelomeric repeat region TARE6.

The protein resides in the nucleus. It localises to the chromosome. The protein localises to the telomere. Its subcellular location is the cytoplasm. In terms of biological role, possesses DNA- and RNA-binding activities. Binds to DNA with relaxed sequence specificity. Associates with the subtelomeric TARE6 repeats. In Plasmodium falciparum (isolate 3D7), this protein is DNA/RNA-binding protein ALBA2.